A 299-amino-acid chain; its full sequence is CRISPR-associated endonuclease Cas1 3 (299 aa).

Mn(2+)-binding residues include glutamate 143, histidine 210, and aspartate 223.

The protein belongs to the CRISPR-associated endonuclease Cas1 family. As to quaternary structure, homodimer, forms a heterotetramer with a Cas2 homodimer. The cofactor is Mg(2+). It depends on Mn(2+) as a cofactor.

Functionally, CRISPR (clustered regularly interspaced short palindromic repeat), is an adaptive immune system that provides protection against mobile genetic elements (viruses, transposable elements and conjugative plasmids). CRISPR clusters contain spacers, sequences complementary to antecedent mobile elements, and target invading nucleic acids. CRISPR clusters are transcribed and processed into CRISPR RNA (crRNA). Acts as a dsDNA endonuclease. Involved in the integration of spacer DNA into the CRISPR cassette. This is CRISPR-associated endonuclease Cas1 3 from Methanospirillum hungatei JF-1 (strain ATCC 27890 / DSM 864 / NBRC 100397 / JF-1).